The chain runs to 197 residues: UPF0301 protein AnaeK_4073 (197 aa).

The protein belongs to the UPF0301 (AlgH) family.

The chain is UPF0301 protein AnaeK_4073 from Anaeromyxobacter sp. (strain K).